The primary structure comprises 248 residues: Zinc finger CCCH domain-containing protein 36 (248 aa).

Disordered regions lie at residues 1–37 and 87–110; these read MDTR…GLGS and MQGS…VSNF. A C3H1-type 1 zinc finger spans residues 36 to 64; the sequence is GSKSKPCTKFFSTSGCPFGENCHFLHYVP. The span at 90-103 shows a compositional bias: gly residues; it reads SGNGGRFSGRGESG. One can recognise a KH domain in the interval 113 to 177; sequence SATARFSVDA…EQISEASAMV (65 aa). The segment at 188-209 is disordered; sequence AKKPPGGGLGGGGGMGSEGKPH. The segment covering 192-204 has biased composition (gly residues); the sequence is PGGGLGGGGGMGS. A C3H1-type 2 zinc finger spans residues 213 to 240; sequence NFKTKICERFSKGNCTFGDRCHFAHGEA.

This Arabidopsis thaliana (Mouse-ear cress) protein is Zinc finger CCCH domain-containing protein 36.